The sequence spans 336 residues: Ketol-acid reductoisomerase (NADP(+)) (336 aa).

Residues 1–182 (MAVIYYDKDA…GVTRAGVIET (182 aa)) form the KARI N-terminal Rossmann domain. NADP(+) contacts are provided by residues 25 to 28 (FGSQ), Arg-48, Ser-51, Ser-53, and 83 to 86 (DEHQ). His-108 is an active-site residue. An NADP(+)-binding site is contributed by Gly-134. The region spanning 183-328 (TFKEETETDL…KELRKMMPWL (146 aa)) is the KARI C-terminal knotted domain. Positions 191, 195, 227, and 231 each coordinate Mg(2+). Residue Ser-252 participates in substrate binding.

It belongs to the ketol-acid reductoisomerase family. Mg(2+) serves as cofactor.

The enzyme catalyses (2R)-2,3-dihydroxy-3-methylbutanoate + NADP(+) = (2S)-2-acetolactate + NADPH + H(+). It catalyses the reaction (2R,3R)-2,3-dihydroxy-3-methylpentanoate + NADP(+) = (S)-2-ethyl-2-hydroxy-3-oxobutanoate + NADPH + H(+). It participates in amino-acid biosynthesis; L-isoleucine biosynthesis; L-isoleucine from 2-oxobutanoate: step 2/4. Its pathway is amino-acid biosynthesis; L-valine biosynthesis; L-valine from pyruvate: step 2/4. Involved in the biosynthesis of branched-chain amino acids (BCAA). Catalyzes an alkyl-migration followed by a ketol-acid reduction of (S)-2-acetolactate (S2AL) to yield (R)-2,3-dihydroxy-isovalerate. In the isomerase reaction, S2AL is rearranged via a Mg-dependent methyl migration to produce 3-hydroxy-3-methyl-2-ketobutyrate (HMKB). In the reductase reaction, this 2-ketoacid undergoes a metal-dependent reduction by NADPH to yield (R)-2,3-dihydroxy-isovalerate. This chain is Ketol-acid reductoisomerase (NADP(+)), found in Thermotoga neapolitana (strain ATCC 49049 / DSM 4359 / NBRC 107923 / NS-E).